Reading from the N-terminus, the 642-residue chain is Putative ATP-binding protein YdiF (642 aa).

ABC transporter domains follow at residues L4 to L259 and L327 to K541. ATP is bound by residues G36–S43 and G360–S367. Composition is skewed to basic and acidic residues over residues K541 to K550 and S557 to K567. Positions K541–K567 are disordered.

Belongs to the ABC transporter superfamily. ABCF family. YdiF subfamily.

The chain is Putative ATP-binding protein YdiF (ydiF) from Bacillus subtilis (strain 168).